The chain runs to 572 residues: Sialate:O-sulfotransferase 2 (572 aa).

The Cytoplasmic segment spans residues 1 to 18 (MARSLLKIHRYFRRKPVR). A helical; Signal-anchor for type II membrane protein transmembrane segment spans residues 19 to 39 (FFSFILLYLTAGSLVFLHSGF). Over 40–572 (SSDSSTAGIA…SGVPDEYRPR (533 aa)) the chain is Extracellular. WSC domains lie at 134–226 (RAKY…YRLE) and 237–331 (SAIF…YQTQ). N-linked (GlcNAc...) asparagine glycans are attached at residues N196, N249, N262, and N561.

Belongs to the WSCD family.

It is found in the golgi apparatus membrane. Functionally, sialate:O-sulfotransferase which catalyzes 8-O-sulfation at the Sia-glycan level using 3'-phosphoadenosine 5'-phosphosulfate (PAPS) as a donor, forming 8-O-sulfated Sia (Sia8S)-glycans. The polypeptide is Sialate:O-sulfotransferase 2 (wscd2) (Danio rerio (Zebrafish)).